Here is a 572-residue protein sequence, read N- to C-terminus: Methionine--tRNA ligase (572 aa).

The 'HIGH' region signature appears at 11–21 (PYINGIKHLGN). Residues Cys143, Cys146, Cys156, and Cys159 each contribute to the Zn(2+) site. The short motif at 346–350 (QFSTS) is the 'KMSKS' region element. Thr349 provides a ligand contact to ATP.

It belongs to the class-I aminoacyl-tRNA synthetase family. MetG type 1 subfamily. As to quaternary structure, monomer. It depends on Zn(2+) as a cofactor.

It localises to the cytoplasm. The enzyme catalyses tRNA(Met) + L-methionine + ATP = L-methionyl-tRNA(Met) + AMP + diphosphate. Functionally, is required not only for elongation of protein synthesis but also for the initiation of all mRNA translation through initiator tRNA(fMet) aminoacylation. This Roseobacter denitrificans (strain ATCC 33942 / OCh 114) (Erythrobacter sp. (strain OCh 114)) protein is Methionine--tRNA ligase.